The sequence spans 584 residues: Aspartate--tRNA(Asp/Asn) ligase (584 aa).

Glu-173 lines the L-aspartate pocket. The segment at 197–200 is aspartate; the sequence is QLFK. Arg-219 provides a ligand contact to L-aspartate. ATP-binding positions include 219–221 and Gln-228; that span reads RDE. His-447 provides a ligand contact to L-aspartate. Glu-477 is a binding site for ATP. Arg-484 is an L-aspartate binding site. ATP is bound at residue 529–532; that stretch reads GFDR.

Belongs to the class-II aminoacyl-tRNA synthetase family. Type 1 subfamily. As to quaternary structure, homodimer.

It localises to the cytoplasm. It carries out the reaction tRNA(Asx) + L-aspartate + ATP = L-aspartyl-tRNA(Asx) + AMP + diphosphate. Aspartyl-tRNA synthetase with relaxed tRNA specificity since it is able to aspartylate not only its cognate tRNA(Asp) but also tRNA(Asn). Reaction proceeds in two steps: L-aspartate is first activated by ATP to form Asp-AMP and then transferred to the acceptor end of tRNA(Asp/Asn). The sequence is that of Aspartate--tRNA(Asp/Asn) ligase from Campylobacter hominis (strain ATCC BAA-381 / DSM 21671 / CCUG 45161 / LMG 19568 / NCTC 13146 / CH001A).